The chain runs to 820 residues: Penicillin-binding protein 1A (820 aa).

Residues 1–120 (MNSDGRHHQS…PAGRLPQPRV (120 aa)) are disordered. Residues 41-53 (TDDRSAPHADSIE) show a composition bias toward basic and acidic residues. The helical transmembrane segment at 139–159 (LTAAVVILLPMVTFTMAYLIV) threads the bilayer. The tract at residues 180–360 (GSEIAKIVPP…RWNWVLDGMV (181 aa)) is transglycosylase. Glutamate 213 serves as the catalytic Proton donor; for transglycosylase activity. Positions 453 to 743 (AVVSIDPHNG…PSDIWKATMD (291 aa)) are transpeptidase. Residue serine 487 is the Acyl-ester intermediate; for transpeptidase activity of the active site. The span at 792–804 (ITIPIGPPTTITL) shows a compositional bias: low complexity. Positions 792–820 (ITIPIGPPTTITLAPPPPAPPAATPTPPP) are disordered. The segment covering 805-820 (APPPPAPPAATPTPPP) has biased composition (pro residues).

The protein in the N-terminal section; belongs to the glycosyltransferase 51 family. It in the C-terminal section; belongs to the transpeptidase family. As to quaternary structure, interacts with RipA via its transpeptidase domain (residues 561-820).

It localises to the cell membrane. It catalyses the reaction [GlcNAc-(1-&gt;4)-Mur2Ac(oyl-L-Ala-gamma-D-Glu-L-Lys-D-Ala-D-Ala)](n)-di-trans,octa-cis-undecaprenyl diphosphate + beta-D-GlcNAc-(1-&gt;4)-Mur2Ac(oyl-L-Ala-gamma-D-Glu-L-Lys-D-Ala-D-Ala)-di-trans,octa-cis-undecaprenyl diphosphate = [GlcNAc-(1-&gt;4)-Mur2Ac(oyl-L-Ala-gamma-D-Glu-L-Lys-D-Ala-D-Ala)](n+1)-di-trans,octa-cis-undecaprenyl diphosphate + di-trans,octa-cis-undecaprenyl diphosphate + H(+). The catalysed reaction is Preferential cleavage: (Ac)2-L-Lys-D-Ala-|-D-Ala. Also transpeptidation of peptidyl-alanyl moieties that are N-acyl substituents of D-alanine.. The protein operates within cell wall biogenesis; peptidoglycan biosynthesis. Functionally, cell wall formation. Synthesis of cross-linked peptidoglycan from the lipid intermediates. The enzyme has a penicillin-insensitive transglycosylase N-terminal domain (formation of linear glycan strands) and a penicillin-sensitive transpeptidase C-terminal domain (cross-linking of the peptide subunits). Has little peptidoglycan hydrolytic activity; however it inhibits the synergistic peptidoglycan hydrolysis of RipA plus RpfB. This Mycobacterium tuberculosis (strain ATCC 25618 / H37Rv) protein is Penicillin-binding protein 1A (ponA1).